The following is a 458-amino-acid chain: tRNA(Ile)-lysidine synthase (458 aa).

Residue 35–40 (SGGVDS) participates in ATP binding.

The protein belongs to the tRNA(Ile)-lysidine synthase family.

The protein localises to the cytoplasm. The catalysed reaction is cytidine(34) in tRNA(Ile2) + L-lysine + ATP = lysidine(34) in tRNA(Ile2) + AMP + diphosphate + H(+). In terms of biological role, ligates lysine onto the cytidine present at position 34 of the AUA codon-specific tRNA(Ile) that contains the anticodon CAU, in an ATP-dependent manner. Cytidine is converted to lysidine, thus changing the amino acid specificity of the tRNA from methionine to isoleucine. The sequence is that of tRNA(Ile)-lysidine synthase from Nitrosomonas europaea (strain ATCC 19718 / CIP 103999 / KCTC 2705 / NBRC 14298).